Reading from the N-terminus, the 549-residue chain is Myotubularin-related protein 9 (549 aa).

An N-acetylmethionine modification is found at M1. One can recognise a GRAM domain in the interval 4-99 (AELIKTPRVD…LNIASSIEAL (96 aa)). One can recognise a Myotubularin phosphatase domain in the interval 123-498 (GWHSFLPEQE…QSLPLWEGIF (376 aa)). A coiled-coil region spans residues 508–542 (LDEAYEEMVNIIEYNKELQAKVNILRRQLAELETE). S548 is modified (phosphoserine).

It belongs to the protein-tyrosine phosphatase family. Non-receptor class myotubularin subfamily. In terms of assembly, homodimer. Heterodimer (via C-terminus) with lipid phosphatase MTMR6 (via C-terminus). Heterodimer (via coiled coil domain) with lipid phosphatase MTMR7 (via C-terminus). Heterodimer with lipid phosphatase MTMR8. In terms of tissue distribution, expressed in many tissues.

Its subcellular location is the cytoplasm. The protein resides in the cell projection. The protein localises to the ruffle membrane. It is found in the perinuclear region. It localises to the endoplasmic reticulum. Functionally, acts as an adapter for myotubularin-related phosphatases. Increases lipid phosphatase MTMR6 catalytic activity, specifically towards phosphatidylinositol 3,5-bisphosphate and MTMR6 binding affinity for phosphorylated phosphatidylinositols. Positively regulates lipid phosphatase MTMR7 catalytic activity. Increases MTMR8 catalytic activity towards phosphatidylinositol 3-phosphate. The formation of the MTMR6-MTMR9 complex, stabilizes both MTMR6 and MTMR9 protein levels. Stabilizes MTMR8 protein levels. Plays a role in the late stages of macropinocytosis possibly by regulating MTMR6-mediated dephosphorylation of phosphatidylinositol 3-phosphate in membrane ruffles. Negatively regulates autophagy, in part via its association with MTMR8. Negatively regulates DNA damage-induced apoptosis, in part via its association with MTMR6. Does not bind mono-, di- and tri-phosphorylated phosphatidylinositols, phosphatidic acid and phosphatidylserine. The polypeptide is Myotubularin-related protein 9 (MTMR9) (Homo sapiens (Human)).